The sequence spans 122 residues: Large ribosomal subunit protein uL14c (122 aa).

The protein belongs to the universal ribosomal protein uL14 family. Part of the 50S ribosomal subunit.

It is found in the plastid. The protein resides in the chloroplast. Functionally, binds to 23S rRNA. The polypeptide is Large ribosomal subunit protein uL14c (Chaetosphaeridium globosum (Charophycean green alga)).